Consider the following 118-residue polypeptide: MSVNVYDVAYDLEKALRHSEEYSTLKNLYDEVNADESSKRMFENFRDIQVNLQQKQMTGQEITQEEVEQAQKTVALVQQHDKISQLMEAEQRVSVLIGELNKVIMKPLEELYGNPEEN.

The protein belongs to the UPF0342 family.

The sequence is that of UPF0342 protein BPUM_0928 from Bacillus pumilus (strain SAFR-032).